An 80-amino-acid polypeptide reads, in one-letter code: Translational regulator CsrA (80 aa).

The protein belongs to the CsrA/RsmA family. Homodimer; the beta-strands of each monomer intercalate to form a hydrophobic core, while the alpha-helices form wings that extend away from the core.

It is found in the cytoplasm. Its function is as follows. A translational regulator that binds mRNA to regulate translation initiation and/or mRNA stability. Usually binds in the 5'-UTR at or near the Shine-Dalgarno sequence preventing ribosome-binding, thus repressing translation. Its main target seems to be the major flagellin gene, while its function is anatagonized by FliW. The polypeptide is Translational regulator CsrA (Desulforamulus reducens (strain ATCC BAA-1160 / DSM 100696 / MI-1) (Desulfotomaculum reducens)).